The sequence spans 213 residues: 3-dehydroquinate dehydratase (213 aa).

3-dehydroquinate contacts are provided by residues 27 to 29 and Arg-53; that span reads EVR. The active-site Proton donor/acceptor is His-111. The active-site Schiff-base intermediate with substrate is the Lys-138. 3-dehydroquinate contacts are provided by Arg-175 and Gln-197.

This sequence belongs to the type-I 3-dehydroquinase family. In terms of assembly, homodimer.

It carries out the reaction 3-dehydroquinate = 3-dehydroshikimate + H2O. Its pathway is metabolic intermediate biosynthesis; chorismate biosynthesis; chorismate from D-erythrose 4-phosphate and phosphoenolpyruvate: step 3/7. Its function is as follows. Involved in the third step of the chorismate pathway, which leads to the biosynthesis of aromatic amino acids. Catalyzes the cis-dehydration of 3-dehydroquinate (DHQ) and introduces the first double bond of the aromatic ring to yield 3-dehydroshikimate. The protein is 3-dehydroquinate dehydratase of Thermococcus gammatolerans (strain DSM 15229 / JCM 11827 / EJ3).